The chain runs to 675 residues: Putative exonuclease GOR (675 aa).

The segment covering 66 to 79 (VAKEAAPEASRHLG) has biased composition (basic and acidic residues). Disordered regions lie at residues 66–90 (VAKEAAPEASRHLGAEQSPAGAPEG) and 225–263 (AKRTRVASSSQRSRGSKVGRQPGKTRNRSGMACKTTATT). Residues 358–483 (MPGLSRAALY…VRDGRKESLD (126 aa)) are GOR1-125 epitope.

This sequence belongs to the REXO1/REXO3 family.

The protein localises to the cytoplasm. Its subcellular location is the nucleus. This Homo sapiens (Human) protein is Putative exonuclease GOR (REXO1L1P).